A 159-amino-acid polypeptide reads, in one-letter code: MRVAVYPGSFDPITNGHLDIIKRGAKVFDKVIVAVLVNVDKKYLFESSERVELIKRVTRDIENVEIRSFDGLLVNFLKECKTNIILKGLRTASDFEYEFQMAFINKELDDDTETVCMMSSAKNIHISSSTVKQVARFGGDISGLVPNEIISDIMSRINL.

Ser9 provides a ligand contact to substrate. Residues 9-10 (SF) and His17 contribute to the ATP site. The substrate site is built by Lys41, Leu73, and Lys87. ATP-binding positions include 88–90 (GLR), Glu98, and 123–129 (NIHISSS).

This sequence belongs to the bacterial CoaD family. As to quaternary structure, homohexamer. Requires Mg(2+) as cofactor.

It localises to the cytoplasm. It carries out the reaction (R)-4'-phosphopantetheine + ATP + H(+) = 3'-dephospho-CoA + diphosphate. It participates in cofactor biosynthesis; coenzyme A biosynthesis; CoA from (R)-pantothenate: step 4/5. Its function is as follows. Reversibly transfers an adenylyl group from ATP to 4'-phosphopantetheine, yielding dephospho-CoA (dPCoA) and pyrophosphate. The sequence is that of Phosphopantetheine adenylyltransferase from Clostridium beijerinckii (strain ATCC 51743 / NCIMB 8052) (Clostridium acetobutylicum).